The primary structure comprises 31 residues: Cyclotide mden-M (31 aa).

A cross-link (cyclopeptide (Gly-Asn)) is located at residues 1-31; sequence GTIPCGESCVYIPCITSALGCSCKKKVCYKN. 3 disulfides stabilise this stretch: Cys5–Cys21, Cys9–Cys23, and Cys14–Cys28.

Belongs to the cyclotide family. Bracelet subfamily. This is a cyclic peptide.

Its function is as follows. Probably participates in a plant defense mechanism. This Melicytus dentatus (Tree violet) protein is Cyclotide mden-M.